Here is a 486-residue protein sequence, read N- to C-terminus: Citrate synthase 3, mitochondrial (486 aa).

A mitochondrion-targeting transit peptide spans 1–23 (MVQRLLPGAHICRRSFNSSAIIK). Active-site residues include His315, His361, and Asp419. The Microbody targeting signal motif lies at 484–486 (NKL).

This sequence belongs to the citrate synthase family.

The protein resides in the mitochondrion. The enzyme catalyses oxaloacetate + acetyl-CoA + H2O = citrate + CoA + H(+). It functions in the pathway carbohydrate metabolism; tricarboxylic acid cycle; isocitrate from oxaloacetate: step 1/2. In terms of biological role, dual specificity mitochondrial citrate and methylcitrate synthase with similar catalytic efficiency with both acetyl-CoA and propionyl-CoA. This Saccharomyces cerevisiae (strain ATCC 204508 / S288c) (Baker's yeast) protein is Citrate synthase 3, mitochondrial.